Consider the following 455-residue polypeptide: Beta-glucosidase A (455 aa).

The active-site Proton donor is E165. E363 acts as the Nucleophile in catalysis.

The protein belongs to the glycosyl hydrolase 1 family.

It carries out the reaction Hydrolysis of terminal, non-reducing beta-D-glucosyl residues with release of beta-D-glucose.. This chain is Beta-glucosidase A (bglA), found in Caldicellulosiruptor saccharolyticus (Caldocellum saccharolyticum).